The primary structure comprises 540 residues: Glucose-6-phosphate isomerase (540 aa).

Glutamate 346 (proton donor) is an active-site residue. Residues histidine 377 and lysine 505 contribute to the active site.

It belongs to the GPI family.

The protein resides in the cytoplasm. The enzyme catalyses alpha-D-glucose 6-phosphate = beta-D-fructose 6-phosphate. The protein operates within carbohydrate biosynthesis; gluconeogenesis. It functions in the pathway carbohydrate degradation; glycolysis; D-glyceraldehyde 3-phosphate and glycerone phosphate from D-glucose: step 2/4. Catalyzes the reversible isomerization of glucose-6-phosphate to fructose-6-phosphate. The sequence is that of Glucose-6-phosphate isomerase from Francisella tularensis subsp. mediasiatica (strain FSC147).